Consider the following 202-residue polypeptide: MSRYRGPRMKIIRRLGSLPGLTNKVLRSKPGYTDQLISNKKVSQYRIRLEEKQKLRFHYGLTERQLLKYVRIARKAKGSTGNVLLQLLEMRLDNVIFRLGMSSTIPGARQLVNHRHIMINDEMVDTPGYNCKPRDIITLKNISESRSGIPKGIDSSQRSRTPNHLVFDSSRGVGFVNQIIDREWISLKINELLVVEYYSRQA.

Residues Met90 to Gly148 form the S4 RNA-binding domain.

It belongs to the universal ribosomal protein uS4 family. Part of the 30S ribosomal subunit. Contacts protein S5. The interaction surface between S4 and S5 is involved in control of translational fidelity.

It localises to the plastid. It is found in the chloroplast. Its function is as follows. One of the primary rRNA binding proteins, it binds directly to 16S rRNA where it nucleates assembly of the body of the 30S subunit. In terms of biological role, with S5 and S12 plays an important role in translational accuracy. The chain is Small ribosomal subunit protein uS4c (rps4) from Haplomitrium hookeri (Hooker's flapwort).